The following is a 997-amino-acid chain: Serine-repeat antigen protein 5 (997 aa).

The first 22 residues, Met1 to Cys22, serve as a signal peptide directing secretion. Disordered stretches follow at residues Ser26–Asp107 and Leu181–Leu252. Over residues Asn30–Pro51 the composition is skewed to gly residues. Over residues Gln52–Pro67 the composition is skewed to low complexity. Positions Gln68–Pro84 are enriched in polar residues. 3 stretches are compositionally biased toward low complexity: residues Val85 to Ser103, Ser183 to Thr196, and Ser205 to Ser235. Position 183 is a phosphoserine (Ser183). N-linked (GlcNAc...) asparagine glycosylation occurs at Asn184. The segment at Ser216 to Gln253 is interaction with PTKL. Asn318 carries an N-linked (GlcNAc...) asparagine glycan. An interaction with host VTN region spans residues Tyr373–Glu390. Cys445 and Cys497 are disulfide-bonded. Thr549 carries the phosphothreonine; by CPK1 modification. Cystine bridges form between Cys567–Cys572, Cys581–Cys610, Cys593–Cys636, Cys627–Cys672, and Cys755–Cys809. The segment at Asn579 to Val997 is thiol-protease-like. Active-site residues include His762 and Asn787. The N-linked (GlcNAc...) asparagine glycan is linked to Asn828. Residues Lys843 to Gln886 constitute a propeptide, inhibition peptide. Phosphoserine is present on Ser866.

Belongs to the peptidase C1 family. As to quaternary structure, may interact (via C-terminus) with PTKL (via SAM domain). In terms of assembly, interacts (via C-terminus) with human VTN (via hemopexin repeat 2); may form heterotetramers of two VTN and SERA5 P47 heterodimers; the interaction may protect merozoites from phagocytosis by host monocytes; VTN glycosylation appears to be dispensable for the interaction. Monomer. Interacts with kinase CPK1/CDPK1 at the schizont stage. In terms of processing, phosphorylation by CPK1/CDPK1 increases SERA5 protease activity towards a synthetic peptide in vitro. Just prior to merozoite egress from host erythrocytes, proteolytically cleaved into multiple fragments. Cleaved by SUB1 into p47 and p73, p73 is further cleaved by SUB1 into p56 and p18 and p56 is further processed into p50 by an unidentified protease. p47 remains covalently associated with p18 via disulfide bond. p47 can be processed into p25n and p25c by SUB1. p25c and p25n remain associated with p18. Proteolytic processing is essential for merozoite egress from host erythrocytes. The cleavage of the propeptide to produce p50 is necessary for protease activity and to promote merozoite egress.

The protein resides in the parasitophorous vacuole. It localises to the secreted. The protein localises to the cell membrane. Plays an essential role during the asexual blood stage development by controlling the kinetics of merozoite egress from host erythrocytes. Specifically, prevents premature rupture of the parasitophorous vacuole and host erythrocyte membranes. Its function is as follows. May prevent merozoite phagocytosis by host monocytes via interaction with host VTN at the merozoite surface. Plays a role in parasite growth. In terms of biological role, protease activity is controversial. Has been shown in a number of studies to have protease activity towards a synthetic peptide in vitro. Has also been shown to lack protease activity towards a synthetic peptide in vitro. The polypeptide is Serine-repeat antigen protein 5 (Plasmodium falciparum (isolate 3D7)).